We begin with the raw amino-acid sequence, 158 residues long: MALLTTGKGFVRALEKSGALGVYAPLEGGFEGRYQRRLRTNGYDSLSLTARGLGDVSAYLMGVHGVRPPHLGKKNIGQGAAVGPIYFVPPIAAYQLESLSPQSKGLVLWILEGYILSKAELEYLVSLPQQEPRIKVVVELGGERYFRWEPLENLIAVA.

This sequence belongs to the complex I NdhN subunit family. As to quaternary structure, NDH-1 can be composed of about 15 different subunits; different subcomplexes with different compositions have been identified which probably have different functions.

It is found in the cellular thylakoid membrane. It catalyses the reaction a plastoquinone + NADH + (n+1) H(+)(in) = a plastoquinol + NAD(+) + n H(+)(out). The enzyme catalyses a plastoquinone + NADPH + (n+1) H(+)(in) = a plastoquinol + NADP(+) + n H(+)(out). Its function is as follows. NDH-1 shuttles electrons from an unknown electron donor, via FMN and iron-sulfur (Fe-S) centers, to quinones in the respiratory and/or the photosynthetic chain. The immediate electron acceptor for the enzyme in this species is believed to be plastoquinone. Couples the redox reaction to proton translocation, and thus conserves the redox energy in a proton gradient. Cyanobacterial NDH-1 also plays a role in inorganic carbon-concentration. The sequence is that of NAD(P)H-quinone oxidoreductase subunit N from Crocosphaera subtropica (strain ATCC 51142 / BH68) (Cyanothece sp. (strain ATCC 51142)).